A 401-amino-acid chain; its full sequence is Large ribosomal subunit protein uL4B (401 aa).

Residues 351–373 (IKAKEKKPDDGKPKAKKPLDAKT) are compositionally biased toward basic and acidic residues. Residues 351 to 401 (IKAKEKKPDDGKPKAKKPLDAKTKMIKLAKAKKRQARAEAKTAEAKTAESK) are disordered. The span at 374–385 (KMIKLAKAKKRQ) shows a compositional bias: basic residues. The span at 386-401 (ARAEAKTAEAKTAESK) shows a compositional bias: basic and acidic residues.

It belongs to the universal ribosomal protein uL4 family. Component of the large ribosomal subunit.

The protein localises to the cytoplasm. Its function is as follows. Component of the large ribosomal subunit. The ribosome is a large ribonucleoprotein complex responsible for the synthesis of proteins in the cell. This Xenopus laevis (African clawed frog) protein is Large ribosomal subunit protein uL4B (rpl4-b).